The sequence spans 427 residues: Stabilizer of axonemal microtubules 4 (427 aa).

3 disordered regions span residues 82–105 (TSKS…PLPW), 273–298 (RTLN…QPPQ), and 314–335 (GNKE…SYEQ). 2 stretches are compositionally biased toward polar residues: residues 287-298 (ASMSHRSYQPPQ) and 321-332 (FTLNNPSYVRSS).

As to quaternary structure, microtubule inner protein component of sperm flagellar doublet microtubules. Interacts with PPP1CA.

It localises to the cell projection. Its subcellular location is the cilium. It is found in the cytoplasm. The protein localises to the cytoskeleton. The protein resides in the flagellum axoneme. In Mus musculus (Mouse), this protein is Stabilizer of axonemal microtubules 4.